The following is a 201-amino-acid chain: Peptide deformylase (201 aa).

The tract at residues 1-24 (MANHFSQLAKKSKTNGNSEKIAKE) is disordered. Positions 121 and 163 each coordinate Fe cation. Residue Glu164 is part of the active site. His167 contributes to the Fe cation binding site.

This sequence belongs to the polypeptide deformylase family. Requires Fe(2+) as cofactor.

The enzyme catalyses N-terminal N-formyl-L-methionyl-[peptide] + H2O = N-terminal L-methionyl-[peptide] + formate. Its function is as follows. Removes the formyl group from the N-terminal Met of newly synthesized proteins. Requires at least a dipeptide for an efficient rate of reaction. N-terminal L-methionine is a prerequisite for activity but the enzyme has broad specificity at other positions. The sequence is that of Peptide deformylase from Prochlorococcus marinus (strain MIT 9312).